The chain runs to 443 residues: Transcriptional adapter 2-alpha (443 aa).

Ser6 is subject to Phosphoserine. The segment at 12–69 adopts a ZZ-type zinc-finger fold; that stretch reads SDKPPCRGCSSYLMEPYIKCAECGPPPFFLCLQCFTRGFEYKKHQSDHTYEIMTSDFP. Cys17, Cys20, Cys31, Cys34, Cys42, Cys45, His55, and His59 together coordinate Zn(2+). An SANT domain is found at 70–122; the sequence is VLDPSWTAQEEMALLEAVMDCGFGNWQDVANQMCTKTKEECEKHYMKHFINNP. Glycyl lysine isopeptide (Lys-Gly) (interchain with G-Cter in SUMO2) cross-links involve residues Lys132 and Lys138. One can recognise an SWIRM domain in the interval 356–443; the sequence is NSGRRSAPPL…LIREGYITKA (88 aa). Residues 426 to 435 mediate DNA binding; sequence KTRKIYDFLI.

In terms of assembly, interacts with GCN5 and NR3C1. Associated with the P/CAF protein in the PCAF complex. Component of the PCAF complex, at least composed of TADA2L/ADA2, TADA3L/ADA3, TAF5L/PAF65-beta, TAF6L/PAF65-alpha, TAF10/TAFII30, TAF12/TAFII20, TAF9/TAFII31 and TRRAP. Component of the ADA2A-containing complex (ATAC), composed of KAT14, KAT2A, TADA2L, TADA3L, ZZ3, MBIP, WDR5, YEATS2, CCDC101 and DR1. Interacts with CCDC134.

Its subcellular location is the nucleus. The protein localises to the chromosome. Functionally, component of the ATAC complex, a complex with histone acetyltransferase activity on histones H3 and H4. Required for the function of some acidic activation domains, which activate transcription from a distant site. Binds double-stranded DNA. Binds dinucleosomes, probably at the linker region between neighboring nucleosomes. Plays a role in chromatin remodeling. May promote TP53/p53 'Lys-321' acetylation, leading to reduced TP53 stability and transcriptional activity. May also promote XRCC6 acetylation thus facilitating cell apoptosis in response to DNA damage. This chain is Transcriptional adapter 2-alpha (Tada2a), found in Rattus norvegicus (Rat).